An 82-amino-acid polypeptide reads, in one-letter code: Small ribosomal subunit protein uS17 (82 aa).

This sequence belongs to the universal ribosomal protein uS17 family. Part of the 30S ribosomal subunit.

Its function is as follows. One of the primary rRNA binding proteins, it binds specifically to the 5'-end of 16S ribosomal RNA. This chain is Small ribosomal subunit protein uS17, found in Bradyrhizobium sp. (strain BTAi1 / ATCC BAA-1182).